A 304-amino-acid chain; its full sequence is Dermonecrotic toxin LlSicTox-betaIA1 (304 aa).

The signal sequence occupies residues 1-21 (MLLSAVISFIGFAAFLQEANG). Positions 22 to 26 (HVVER) are excised as a propeptide. Residue His-38 is part of the active site. Mg(2+)-binding residues include Glu-58 and Asp-60. The active-site Nucleophile is the His-74. 2 disulfides stabilise this stretch: Cys-78–Cys-84 and Cys-80–Cys-223. Residue Asp-118 participates in Mg(2+) binding.

Belongs to the arthropod phospholipase D family. Class II subfamily. Class IIb sub-subfamily. Requires Mg(2+) as cofactor. In terms of tissue distribution, expressed by the venom gland.

It localises to the secreted. The enzyme catalyses an N-(acyl)-sphingosylphosphocholine = an N-(acyl)-sphingosyl-1,3-cyclic phosphate + choline. It catalyses the reaction an N-(acyl)-sphingosylphosphoethanolamine = an N-(acyl)-sphingosyl-1,3-cyclic phosphate + ethanolamine. The catalysed reaction is a 1-acyl-sn-glycero-3-phosphocholine = a 1-acyl-sn-glycero-2,3-cyclic phosphate + choline. It carries out the reaction a 1-acyl-sn-glycero-3-phosphoethanolamine = a 1-acyl-sn-glycero-2,3-cyclic phosphate + ethanolamine. Functionally, dermonecrotic toxins cleave the phosphodiester linkage between the phosphate and headgroup of certain phospholipids (sphingolipid and lysolipid substrates), forming an alcohol (often choline) and a cyclic phosphate. This toxin acts on sphingomyelin (SM) with low activity. It may also act on ceramide phosphoethanolamine (CPE), lysophosphatidylcholine (LPC) and lysophosphatidylethanolamine (LPE), but not on lysophosphatidylserine (LPS), and lysophosphatidylglycerol (LPG). It acts by transphosphatidylation, releasing exclusively cyclic phosphate products as second products. Induces hemolysis, dermonecrosis, and edema. Also induces platelet aggregation. This chain is Dermonecrotic toxin LlSicTox-betaIA1, found in Loxosceles laeta (South American recluse spider).